The following is a 599-amino-acid chain: Potassium-transporting ATPase potassium-binding subunit (599 aa).

The next 12 membrane-spanning stretches (helical) occupy residues 8–28, 61–81, 133–153, 176–196, 280–300, 311–331, 366–386, 391–411, 416–436, 456–476, 521–541, and 563–583; these read LLALYLGALLLAAWPLGIWLA, WQYALALLAFNALGLLAVYAL, ALAVQNFLSAATGIAVVFALF, AWLLLPLSLVFALFLAGNGVI, LTNFFQMLAIFLIPAALCFAF, WAVLAAMTVMFVIAVVAITPA, INASSLFAVITTAASCGAVIA, FTPLGGMVPMVMMQLGEVVFG, GLYGMLIFAILAVFISGLMIG, IAILVTPILVLAGTAVAVLAG, LLGLAMWLGRFGVIVPVLAIA, and LFVLLLIGTVLLVGLLNYVPA.

This sequence belongs to the KdpA family. As to quaternary structure, the system is composed of three essential subunits: KdpA, KdpB and KdpC.

Its subcellular location is the cell inner membrane. Functionally, part of the high-affinity ATP-driven potassium transport (or Kdp) system, which catalyzes the hydrolysis of ATP coupled with the electrogenic transport of potassium into the cytoplasm. This subunit binds the periplasmic potassium ions and delivers the ions to the membrane domain of KdpB through an intramembrane tunnel. This is Potassium-transporting ATPase potassium-binding subunit from Polaromonas naphthalenivorans (strain CJ2).